The sequence spans 369 residues: Chaperone protein DnaJ (369 aa).

The J domain maps to 7–73; it reads DYYEILGVPR…QKRAMYDRFG (67 aa). The segment at 143–225 adopts a CR-type zinc-finger fold; sequence GAEIPVEYER…CGGSGRVLRK (83 aa). Cysteine 156, cysteine 159, cysteine 173, cysteine 176, cysteine 199, cysteine 202, cysteine 213, and cysteine 216 together coordinate Zn(2+). CXXCXGXG motif repeat units follow at residues 156 to 163, 173 to 180, 199 to 206, and 213 to 220; these read CPRCGGTG, CPSCGGTG, CERCGGTG, and CHECGGSG.

Belongs to the DnaJ family. As to quaternary structure, homodimer. Zn(2+) serves as cofactor.

The protein resides in the cytoplasm. Functionally, participates actively in the response to hyperosmotic and heat shock by preventing the aggregation of stress-denatured proteins and by disaggregating proteins, also in an autonomous, DnaK-independent fashion. Unfolded proteins bind initially to DnaJ; upon interaction with the DnaJ-bound protein, DnaK hydrolyzes its bound ATP, resulting in the formation of a stable complex. GrpE releases ADP from DnaK; ATP binding to DnaK triggers the release of the substrate protein, thus completing the reaction cycle. Several rounds of ATP-dependent interactions between DnaJ, DnaK and GrpE are required for fully efficient folding. Also involved, together with DnaK and GrpE, in the DNA replication of plasmids through activation of initiation proteins. This chain is Chaperone protein DnaJ, found in Thermotoga sp. (strain RQ2).